The primary structure comprises 212 residues: Protein ERP5 (212 aa).

Residues 1–20 (MKYNIVHGICLLFAITQAVG) form the signal peptide. The Lumenal portion of the chain corresponds to 21–178 (AVHFYAKSGE…FRNQSESANS (158 aa)). Residues 31–124 (TKCFYEHLSR…TLRVFIELEI (94 aa)) form the GOLD domain. N-linked (GlcNAc...) asparagine glycosylation is present at Asn-171. A helical transmembrane segment spans residues 179–199 (KIMTWSVFQLLILLGTCAFQL). Over 200-212 (RYLKNFFVKQKVV) the chain is Cytoplasmic.

It belongs to the EMP24/GP25L family.

The protein resides in the endoplasmic reticulum membrane. Functionally, involved in vesicular protein trafficking. This chain is Protein ERP5 (ERP5), found in Saccharomyces cerevisiae (strain ATCC 204508 / S288c) (Baker's yeast).